The sequence spans 326 residues: DNA-directed RNA polymerase subunit alpha (326 aa).

The alpha N-terminal domain (alpha-NTD) stretch occupies residues 1 to 231; that stretch reads MQSNALLKPR…DQLSVFADLE (231 aa). Residues 245–326 form an alpha C-terminal domain (alpha-CTD) region; it reads IDPVLLRPVD…WPPAGLEKLG (82 aa).

It belongs to the RNA polymerase alpha chain family. Homodimer. The RNAP catalytic core consists of 2 alpha, 1 beta, 1 beta' and 1 omega subunit. When a sigma factor is associated with the core the holoenzyme is formed, which can initiate transcription.

It carries out the reaction RNA(n) + a ribonucleoside 5'-triphosphate = RNA(n+1) + diphosphate. DNA-dependent RNA polymerase catalyzes the transcription of DNA into RNA using the four ribonucleoside triphosphates as substrates. In Azoarcus sp. (strain BH72), this protein is DNA-directed RNA polymerase subunit alpha.